The following is a 2835-amino-acid chain: Vanchrobactin synthetase VabF (2835 aa).

A condensation 1 region spans residues glutamate 16–threonine 452. The segment at glutamine 473–arginine 880 is adenylation 1. The Carrier 1 domain maps to alanine 988–glutamine 1062. At serine 1023 the chain carries O-(pantetheine 4'-phosphoryl)serine. Condensation regions lie at residues tryptophan 1081–glutamine 1499 and aspartate 1539–leucine 1961. An adenylation 2 region spans residues glutamine 1992–arginine 2394. Residues asparagine 2503–aspartate 2578 form the Carrier 2 domain. Position 2538 is an O-(pantetheine 4'-phosphoryl)serine (serine 2538). The segment at alanine 2601–glutamate 2821 is thioesterase.

This sequence belongs to the NRP synthetase family. Pantetheine 4'-phosphate is required as a cofactor.

The enzyme catalyses holo-[peptidyl-carrier protein] + L-arginine + ATP = L-arginyl-[peptidyl-carrier protein] + AMP + diphosphate. It carries out the reaction holo-[peptidyl-carrier protein] + L-serine + ATP = L-seryl-[peptidyl-carrier protein] + AMP + diphosphate. It participates in siderophore biosynthesis. Involved in the synthesis of the siderophore vanchrobactin. Probably adenylates L-arginine via its first adenylation domain and loads it onto its first peptidyl carrier domain via a thioester linkage to the phosphopanthetheine moiety. In addition, may adenylate L-serine via its second adenylation domain and loads it onto its second peptidyl carrier domain via a thioester linkage to the phosphopanthetheine moiety. The thioesterase domain may release vanchrobactin after condensation of the siderophore components. This chain is Vanchrobactin synthetase VabF, found in Vibrio anguillarum (Listonella anguillarum).